A 93-amino-acid polypeptide reads, in one-letter code: Auxin-responsive protein SAUR26 (93 aa).

It belongs to the ARG7 family. As to quaternary structure, interacts with PP2C-D1. Higher expression in thermo-responsive cultivars (e.g. cv. Alst-1, cv. Ang-0 and cv. Com-0) than in low thermo-responsive cultivars (e.g. cv. Dja-1, cv. El-0 and cv. Kon).

The protein resides in the cell membrane. In terms of biological role, provide a mechanistic link between auxin and plasma membrane H(+)-ATPases (PM H(+)-ATPases, e.g. AHA1 and AHA2), and triggers PM H(+)-ATPases activity by promoting phosphorylation of their C-terminal autoinhibitory domain as a result of PP2C-D subfamily of type 2C phosphatases inhibition, thus leading to the acidification of the apoplast and the facilitation of solutes and water uptake to drive cell expansion. Functions as a positive effectors of cell expansion through modulation of auxin transport. Involved in thermo-responsiveness of plant architecture. Enhances plasma membrane H(+)-ATPase. Probably involved in light intensity mediated root development. The sequence is that of Auxin-responsive protein SAUR26 from Arabidopsis thaliana (Mouse-ear cress).